A 304-amino-acid polypeptide reads, in one-letter code: MSNVLELTIPASTANLGVGFDSIGMALDKFLHLSVKETSGTKWEYIFHDDASKQLPTDETNFIYHVAQQVASKYSVDLPNLCIEMRSDIPLARGLGSSASALVGAIYIANYFGDIQLSKHEVLQLATEIEGHPDNVAPTIYGGLIAGYYNDVSKETSVAHIDIPDVDVIVTIPTYELKTEASRRALPQKLTHSEAVKSSAISNTMICALAQHNYELAGKLMQQDGFHEPYRQHLIAEFDEVKTIAIQHNAYATVISGAGPTILIFSRKENSGELVRSLNSQVVSCHSELVDINISGVKERIVYQ.

90-100 (PLARGLGSSAS) serves as a coordination point for ATP.

This sequence belongs to the GHMP kinase family. Homoserine kinase subfamily.

The protein resides in the cytoplasm. The catalysed reaction is L-homoserine + ATP = O-phospho-L-homoserine + ADP + H(+). It functions in the pathway amino-acid biosynthesis; L-threonine biosynthesis; L-threonine from L-aspartate: step 4/5. Functionally, catalyzes the ATP-dependent phosphorylation of L-homoserine to L-homoserine phosphate. The sequence is that of Homoserine kinase from Staphylococcus aureus (strain MSSA476).